A 304-amino-acid polypeptide reads, in one-letter code: Glycosyltransferase AglE (304 aa).

The protein belongs to the glycosyltransferase 2 family.

The protein localises to the cell membrane. It functions in the pathway cell surface structure biogenesis; S-layer biogenesis. Its function is as follows. Involved in the assembly of a N-linked pentasaccharide that decorates the S-layer glycoprotein and flagellins. Catalyzes the addition to the dolichol phosphate carrier of the hexuronic acid found at position 4 of the pentasaccharide. The sequence is that of Glycosyltransferase AglE (aglE) from Haloferax volcanii (strain ATCC 29605 / DSM 3757 / JCM 8879 / NBRC 14742 / NCIMB 2012 / VKM B-1768 / DS2) (Halobacterium volcanii).